Here is a 177-residue protein sequence, read N- to C-terminus: Dual-action ribosomal maturation protein DarP (177 aa).

The protein belongs to the DarP family.

Its subcellular location is the cytoplasm. Functionally, member of a network of 50S ribosomal subunit biogenesis factors which assembles along the 30S-50S interface, preventing incorrect 23S rRNA structures from forming. Promotes peptidyl transferase center (PTC) maturation. This Glaesserella parasuis serovar 5 (strain SH0165) (Haemophilus parasuis) protein is Dual-action ribosomal maturation protein DarP.